The primary structure comprises 629 residues: Phosphomethylpyrimidine synthase (629 aa).

Residues 1 to 20 (MSTTLKNAAHLSESAQVDSG) are disordered. Residues Asn233, Met262, Tyr291, His327, 347-349 (SRG), 388-391 (DGLR), and Glu427 contribute to the substrate site. Residue His431 coordinates Zn(2+). Tyr454 is a substrate binding site. His495 contributes to the Zn(2+) binding site. Positions 575, 578, and 583 each coordinate [4Fe-4S] cluster.

It belongs to the ThiC family. As to quaternary structure, homodimer. [4Fe-4S] cluster serves as cofactor.

The catalysed reaction is 5-amino-1-(5-phospho-beta-D-ribosyl)imidazole + S-adenosyl-L-methionine = 4-amino-2-methyl-5-(phosphooxymethyl)pyrimidine + CO + 5'-deoxyadenosine + formate + L-methionine + 3 H(+). It participates in cofactor biosynthesis; thiamine diphosphate biosynthesis. Catalyzes the synthesis of the hydroxymethylpyrimidine phosphate (HMP-P) moiety of thiamine from aminoimidazole ribotide (AIR) in a radical S-adenosyl-L-methionine (SAM)-dependent reaction. The protein is Phosphomethylpyrimidine synthase of Pseudomonas savastanoi pv. phaseolicola (strain 1448A / Race 6) (Pseudomonas syringae pv. phaseolicola (strain 1448A / Race 6)).